The following is a 249-amino-acid chain: Deoxyribose-phosphate aldolase (249 aa).

The active-site Proton donor/acceptor is Asp94. Residue Lys158 is the Schiff-base intermediate with acetaldehyde of the active site. Residue Lys200 is the Proton donor/acceptor of the active site.

This sequence belongs to the DeoC/FbaB aldolase family. DeoC type 1 subfamily.

Its subcellular location is the cytoplasm. The enzyme catalyses 2-deoxy-D-ribose 5-phosphate = D-glyceraldehyde 3-phosphate + acetaldehyde. Its pathway is carbohydrate degradation; 2-deoxy-D-ribose 1-phosphate degradation; D-glyceraldehyde 3-phosphate and acetaldehyde from 2-deoxy-alpha-D-ribose 1-phosphate: step 2/2. Catalyzes a reversible aldol reaction between acetaldehyde and D-glyceraldehyde 3-phosphate to generate 2-deoxy-D-ribose 5-phosphate. This Thermoplasma volcanium (strain ATCC 51530 / DSM 4299 / JCM 9571 / NBRC 15438 / GSS1) protein is Deoxyribose-phosphate aldolase.